The following is a 266-amino-acid chain: Tryptophan synthase alpha chain (266 aa).

Catalysis depends on proton acceptor residues E47 and D58.

This sequence belongs to the TrpA family. As to quaternary structure, tetramer of two alpha and two beta chains.

It is found in the plastid. It localises to the chloroplast. It catalyses the reaction (1S,2R)-1-C-(indol-3-yl)glycerol 3-phosphate + L-serine = D-glyceraldehyde 3-phosphate + L-tryptophan + H2O. It functions in the pathway amino-acid biosynthesis; L-tryptophan biosynthesis; L-tryptophan from chorismate: step 5/5. Functionally, the alpha subunit is responsible for the aldol cleavage of indoleglycerol phosphate to indole and glyceraldehyde 3-phosphate. In Cyanidium caldarium (Red alga), this protein is Tryptophan synthase alpha chain.